The chain runs to 408 residues: Arginine biosynthesis bifunctional protein ArgJ (408 aa).

The substrate site is built by T158, K184, T195, E281, N403, and T408. Catalysis depends on T195, which acts as the Nucleophile.

It belongs to the ArgJ family. Heterotetramer of two alpha and two beta chains.

The protein localises to the cytoplasm. The catalysed reaction is N(2)-acetyl-L-ornithine + L-glutamate = N-acetyl-L-glutamate + L-ornithine. The enzyme catalyses L-glutamate + acetyl-CoA = N-acetyl-L-glutamate + CoA + H(+). It participates in amino-acid biosynthesis; L-arginine biosynthesis; L-ornithine and N-acetyl-L-glutamate from L-glutamate and N(2)-acetyl-L-ornithine (cyclic): step 1/1. The protein operates within amino-acid biosynthesis; L-arginine biosynthesis; N(2)-acetyl-L-ornithine from L-glutamate: step 1/4. Catalyzes two activities which are involved in the cyclic version of arginine biosynthesis: the synthesis of N-acetylglutamate from glutamate and acetyl-CoA as the acetyl donor, and of ornithine by transacetylation between N(2)-acetylornithine and glutamate. The protein is Arginine biosynthesis bifunctional protein ArgJ of Bacillus thuringiensis subsp. konkukian (strain 97-27).